The sequence spans 331 residues: Neuropeptides B/W receptor type 1 (331 aa).

Residues 1–43 are Extracellular-facing; it reads MHNASYWGPERANTSCPAPAPTLGCPNASGPAPPLPPPLAVAV. N-linked (GlcNAc...) asparagine glycosylation is found at Asn3, Asn13, and Asn27. A helical transmembrane segment spans residues 44–66; the sequence is PVVYAVICAVGLAGNSAVLFVLL. At 67-75 the chain is on the cytoplasmic side; the sequence is RAPRRKTVT. A helical transmembrane segment spans residues 76-100; the sequence is NLFILNLAVADELFTLVPPVNIADF. Residues 101 to 115 are Extracellular-facing; the sequence is LLRRWPFGELLCKLV. An intrachain disulfide couples Cys112 to Cys191. Residues 116–135 form a helical membrane-spanning segment; the sequence is VAVDQYNTFSSLYFLTVMSA. Topologically, residues 136-160 are cytoplasmic; that stretch reads DRYLVVLATAESRRVAGRTYGAARA. Residues 161-180 traverse the membrane as a helical segment; sequence VSLAVWGVATLVVLPFAVFA. Residues 181–205 lie on the Extracellular side of the membrane; that stretch reads RLDEEQGRRQCVLVFPQPEALWWRA. The helical transmembrane segment at 206–227 threads the bilayer; sequence SRLYTLVLGFAIPVSTICVLYT. Residues 228 to 251 are Cytoplasmic-facing; it reads SLLCRLRAIRLDSHAKALDRAKKR. Residues 252–276 form a helical membrane-spanning segment; that stretch reads VTVLVVAILAVCLLVWTPYHLSTVV. Topologically, residues 277–286 are extracellular; that stretch reads ALTTDLPQTP. The chain crosses the membrane as a helical span at residues 287–301; that stretch reads LVIAVSYFITSLSYA. Residues 302-331 are Cytoplasmic-facing; that stretch reads NSCLNPFLYAFLDDSFRRSLRQLLACRTTS.

It belongs to the G-protein coupled receptor 1 family.

Its subcellular location is the cell membrane. Interacts specifically with a number of opioid ligands. Receptor for neuropeptides B and W, which may be involved in neuroendocrine system regulation, food intake and the organization of other signals. The chain is Neuropeptides B/W receptor type 1 (NPBWR1) from Bos taurus (Bovine).